Reading from the N-terminus, the 414-residue chain is L-cysteine:1D-myo-inositol 2-amino-2-deoxy-alpha-D-glucopyranoside ligase (414 aa).

Cys43 lines the Zn(2+) pocket. L-cysteinyl-5'-AMP contacts are provided by residues 43–46 (CGIT), Thr58, and 81–83 (NVT). The 'HIGH' region signature appears at 45–55 (ITPYDATHLGH). The 'ERGGDP' region motif lies at 187–192 (ERGGDP). Trp227 contacts L-cysteinyl-5'-AMP. Residue Cys231 coordinates Zn(2+). Residue 249-251 (GSD) coordinates L-cysteinyl-5'-AMP. His256 provides a ligand contact to Zn(2+). An L-cysteinyl-5'-AMP-binding site is contributed by Ile283. Positions 289-293 (KMSKS) match the 'KMSKS' region motif.

This sequence belongs to the class-I aminoacyl-tRNA synthetase family. MshC subfamily. As to quaternary structure, monomer. Requires Zn(2+) as cofactor.

The enzyme catalyses 1D-myo-inositol 2-amino-2-deoxy-alpha-D-glucopyranoside + L-cysteine + ATP = 1D-myo-inositol 2-(L-cysteinylamino)-2-deoxy-alpha-D-glucopyranoside + AMP + diphosphate + H(+). In terms of biological role, catalyzes the ATP-dependent condensation of GlcN-Ins and L-cysteine to form L-Cys-GlcN-Ins. The sequence is that of L-cysteine:1D-myo-inositol 2-amino-2-deoxy-alpha-D-glucopyranoside ligase from Tsukamurella paurometabola (strain ATCC 8368 / DSM 20162 / CCUG 35730 / CIP 100753 / JCM 10117 / KCTC 9821 / NBRC 16120 / NCIMB 702349 / NCTC 13040) (Corynebacterium paurometabolum).